Reading from the N-terminus, the 350-residue chain is UDP-N-acetylenolpyruvoylglucosamine reductase (350 aa).

In terms of domain architecture, FAD-binding PCMH-type spans 24-195; the sequence is HVDATARWLL…VAVEFNLPLL (172 aa). Residue Arg-172 is part of the active site. Ser-245 acts as the Proton donor in catalysis. Glu-342 is a catalytic residue.

This sequence belongs to the MurB family. It depends on FAD as a cofactor.

It localises to the cytoplasm. The enzyme catalyses UDP-N-acetyl-alpha-D-muramate + NADP(+) = UDP-N-acetyl-3-O-(1-carboxyvinyl)-alpha-D-glucosamine + NADPH + H(+). Its pathway is cell wall biogenesis; peptidoglycan biosynthesis. Functionally, cell wall formation. The chain is UDP-N-acetylenolpyruvoylglucosamine reductase from Xanthomonas campestris pv. campestris (strain 8004).